The primary structure comprises 106 residues: Halilectin 3, beta chain (106 aa).

Residue N65 is glycosylated (N-linked (GlcNAc...) asparagine).

As to quaternary structure, probable heterotrimer consisting of an alpha chain and two beta chains. The alpha chain can probably have different glycosylation states. In terms of processing, glycosylated.

Its function is as follows. Lectin with affinity for N-acetyl-galactosamine, carragenan and glycoprotein porcine stomach mucin (PSM). Has metal-independent hemagglutinating activity towards erythrocytes from rabbit and human. Hemagglutinating activity is not inhibited by D-galactose, D-glucose, D-mannose, D-fucose, methyl-alpha-D-galactopyranoside, methyl-alpha-D-glucopyranoside, N-acetyl-glucosamine, N-acetyl-mannosamine, D-fructose, alpha-D-lactose, beta-D-lactose, D-lactulose, D-sucrose, fucoidan or glycoproteins thyroglobulin and ovalmucoid. The protein is Halilectin 3, beta chain of Haliclona caerulea (Blue Caribbean sponge).